The sequence spans 142 residues: Hemoglobin subunit alpha-1 (142 aa).

A Globin domain is found at 2–142; that stretch reads VLSPADKTNI…VSTVLTSKYR (141 aa). His-59 is an O2 binding site. Position 88 (His-88) interacts with heme b.

This sequence belongs to the globin family. As to quaternary structure, heterotetramer of two alpha chains and two beta chains. In terms of tissue distribution, red blood cells.

Involved in oxygen transport from the lung to the various peripheral tissues. This chain is Hemoglobin subunit alpha-1, found in Arctocephalus galapagoensis (Galapagoes fur seal).